The primary structure comprises 162 residues: Regulator of ribonuclease activity A (162 aa).

The protein belongs to the RraA family. In terms of assembly, homotrimer. Binds to both RNA-binding sites in the C-terminal region of Rne and to RhlB.

It localises to the cytoplasm. Its function is as follows. Globally modulates RNA abundance by binding to RNase E (Rne) and regulating its endonucleolytic activity. Can modulate Rne action in a substrate-dependent manner by altering the composition of the degradosome. Modulates RNA-binding and helicase activities of the degradosome. The sequence is that of Regulator of ribonuclease activity A from Haemophilus influenzae (strain ATCC 51907 / DSM 11121 / KW20 / Rd).